Reading from the N-terminus, the 302-residue chain is TATA-box-binding protein (302 aa).

Disordered regions lie at residues methionine 1–threonine 22 and serine 50–glutamine 81. Over residues serine 50 to glycine 70 the composition is skewed to low complexity. Tandem repeats lie at residues leucine 128–valine 204 and isoleucine 218–leucine 295.

This sequence belongs to the TBP family. Enriched in testis but hardly detectable in the ovary (at protein level).

It is found in the nucleus. Functionally, general transcription factor that functions at the core of the DNA-binding multiprotein factor TFIID. Binding of TFIID to the TATA box is the initial transcriptional step of the pre-initiation complex (PIC), playing a role in the activation of eukaryotic genes transcribed by RNA polymerase II. Members of the TBP family are differentially required for transcription and development during early embryogenesis. Regulates mRNA levels in the early embryo by both transcriptional and post-transcriptional mechanisms. Required for transcription of a subset of genes at the mid-blastula transition (MBT). Negatively regulates the expression of other embryonic genes, including autoregulation of the tbp promoter itself. Also functions within a transcription-dependent mechanism to direct the temporally-regulated degradation of a subset of maternal mRNAs after the MBT. This is part of a general mechanism to regulate the maternal to zygotic transition and is required for normal embryonic development. Binds to promoters of a subset of genes. Required for gastrulation. The polypeptide is TATA-box-binding protein (Danio rerio (Zebrafish)).